We begin with the raw amino-acid sequence, 515 residues long: Cytochrome P450 1A1 (515 aa).

Phenylalanine 225 serves as a coordination point for substrate. Residue cysteine 459 coordinates heme.

It belongs to the cytochrome P450 family. It depends on heme as a cofactor.

The protein localises to the endoplasmic reticulum membrane. Its subcellular location is the microsome membrane. The catalysed reaction is an organic molecule + reduced [NADPH--hemoprotein reductase] + O2 = an alcohol + oxidized [NADPH--hemoprotein reductase] + H2O + H(+). Its function is as follows. Cytochromes P450 are a group of heme-thiolate monooxygenases. They oxidize a variety of structurally unrelated compounds, including steroids, fatty acids, and xenobiotics. The protein is Cytochrome P450 1A1 (cyp1a1) of Microgadus tomcod (Atlantic tomcod).